The chain runs to 522 residues: Cytochrome P450 9c1 (522 aa).

Residue Cys464 participates in heme binding.

It belongs to the cytochrome P450 family. Requires heme as cofactor.

The protein localises to the endoplasmic reticulum membrane. The protein resides in the microsome membrane. Functionally, may be involved in the metabolism of insect hormones and in the breakdown of synthetic insecticides. The polypeptide is Cytochrome P450 9c1 (Cyp9c1) (Drosophila melanogaster (Fruit fly)).